The primary structure comprises 294 residues: 4-diphosphocytidyl-2-C-methyl-D-erythritol kinase (294 aa).

Lysine 11 is an active-site residue. Position 93 to 103 (93 to 103 (PFGAGLGGGSS)) interacts with ATP. Aspartate 135 is a catalytic residue.

This sequence belongs to the GHMP kinase family. IspE subfamily.

It catalyses the reaction 4-CDP-2-C-methyl-D-erythritol + ATP = 4-CDP-2-C-methyl-D-erythritol 2-phosphate + ADP + H(+). Its pathway is isoprenoid biosynthesis; isopentenyl diphosphate biosynthesis via DXP pathway; isopentenyl diphosphate from 1-deoxy-D-xylulose 5-phosphate: step 3/6. Functionally, catalyzes the phosphorylation of the position 2 hydroxy group of 4-diphosphocytidyl-2C-methyl-D-erythritol. This chain is 4-diphosphocytidyl-2-C-methyl-D-erythritol kinase, found in Chlorobium phaeobacteroides (strain DSM 266 / SMG 266 / 2430).